The following is an 86-amino-acid chain: Large ribosomal subunit protein bL27 (86 aa).

Residues 1 to 23 are disordered; that stretch reads MAHKKAGGSTRNGRDSESKRLGV.

The protein belongs to the bacterial ribosomal protein bL27 family.

This chain is Large ribosomal subunit protein bL27, found in Alkalilimnicola ehrlichii (strain ATCC BAA-1101 / DSM 17681 / MLHE-1).